A 307-amino-acid chain; its full sequence is Olfactory receptor 12D2 (307 aa).

The Extracellular portion of the chain corresponds to 1-23; sequence MLNTTSVTEFLLLGVTDIQELQP. A glycan (N-linked (GlcNAc...) asparagine) is linked at asparagine 3. The helical transmembrane segment at 24–44 threads the bilayer; sequence FLFVVFLTIYFISVTGNGAVL. Topologically, residues 45-52 are cytoplasmic; it reads MIVISDPR. The helical transmembrane segment at 53 to 73 threads the bilayer; that stretch reads LHSLMYFFLGNLSYLDICYST. The Extracellular portion of the chain corresponds to 74–97; that stretch reads VTLPKMLQNFLSTHKAISFLGCIS. A disulfide bridge connects residues cysteine 95 and cysteine 187. The helical transmembrane segment at 98-118 threads the bilayer; it reads QLHFFHSLGSTESMLFAVMAF. Topologically, residues 119–137 are cytoplasmic; sequence DLSVAICKPLRYTVIMNPQ. Residues 138–158 form a helical membrane-spanning segment; it reads LCTQMAITIWVIGFFHALLHS. At 159-195 the chain is on the extracellular side; the sequence is VMTSRLNFCGSNRIHHFLCDIKPLLKLACGNTELNQW. The helical transmembrane segment at 196–215 threads the bilayer; it reads LLSTVTGTIAMGPFFLTLLS. Residues 216 to 236 lie on the Cytoplasmic side of the membrane; it reads YFYIITYLFFKTRSCSMLCKA. The helical transmembrane segment at 237–257 threads the bilayer; sequence LSTCASHFMVVILFYAPVLFT. Residues 258 to 270 are Extracellular-facing; the sequence is YIHPALESFMDQD. Residues 271 to 291 traverse the membrane as a helical segment; that stretch reads RIVAIMYTVVTPVLNPLIYTL. Over 292–307 the chain is Cytoplasmic; sequence RNKEVKGALGRVIRRL.

It belongs to the G-protein coupled receptor 1 family.

The protein resides in the cell membrane. Odorant receptor. The polypeptide is Olfactory receptor 12D2 (OR12D2) (Homo sapiens (Human)).